Consider the following 92-residue polypeptide: Small ribosomal subunit protein uS19c (92 aa).

Belongs to the universal ribosomal protein uS19 family.

It is found in the plastid. The protein resides in the chloroplast. Its function is as follows. Protein S19 forms a complex with S13 that binds strongly to the 16S ribosomal RNA. In Pinus koraiensis (Korean pine), this protein is Small ribosomal subunit protein uS19c.